Reading from the N-terminus, the 328-residue chain is MYNFKDSVSITVVSGNGGSGCVSFLREKFNAKGGPDGGNGGSGGSVIFKVRENLRTLSFYKNGHVLCAKNGQPGMGFKRSGANGKDLILFVPPNTDIYNENDGTLLCRLENLNDEFVILKGGRGGLGNWNFKTSVRRAPRFAQPGESGNSLNVRLELFLVADIGLVGLPNAGKSSLLNRITSAKSRVANYPFTTKIPHLGILRYSYDDLIIADIPGIIKGASFGVGLGTKFLKHISKTKILALVIDISEANFLESYNILLNELKTYSYNLFYKKKIIIANKLDLDSSKKNFDCLIKALGKEKIVGISIYENKGIDELIKEFFVLAKTF.

The region spanning 2–160 is the Obg domain; it reads YNFKDSVSIT…LNVRLELFLV (159 aa). In terms of domain architecture, OBG-type G spans 161–326; that stretch reads ADIGLVGLPN…LIKEFFVLAK (166 aa). GTP is bound by residues 167–174, 192–196, 213–216, 280–283, and 307–309; these read GLPNAGKS, FTTKI, DIPG, NKLD, and SIY. Ser-174 and Thr-194 together coordinate Mg(2+).

Belongs to the TRAFAC class OBG-HflX-like GTPase superfamily. OBG GTPase family. In terms of assembly, monomer. Requires Mg(2+) as cofactor.

The protein localises to the cytoplasm. Its function is as follows. An essential GTPase which binds GTP, GDP and possibly (p)ppGpp with moderate affinity, with high nucleotide exchange rates and a fairly low GTP hydrolysis rate. Plays a role in control of the cell cycle, stress response, ribosome biogenesis and in those bacteria that undergo differentiation, in morphogenesis control. The protein is GTPase Obg of Borreliella afzelii (strain PKo) (Borrelia afzelii).